A 365-amino-acid chain; its full sequence is Peptide chain release factor 1 (365 aa).

Residue Gln242 is modified to N5-methylglutamine.

The protein belongs to the prokaryotic/mitochondrial release factor family. In terms of processing, methylated by PrmC. Methylation increases the termination efficiency of RF1.

Its subcellular location is the cytoplasm. Its function is as follows. Peptide chain release factor 1 directs the termination of translation in response to the peptide chain termination codons UAG and UAA. This chain is Peptide chain release factor 1, found in Fusobacterium nucleatum subsp. nucleatum (strain ATCC 25586 / DSM 15643 / BCRC 10681 / CIP 101130 / JCM 8532 / KCTC 2640 / LMG 13131 / VPI 4355).